Here is a 484-residue protein sequence, read N- to C-terminus: NADH-ubiquinone oxidoreductase chain 4 (484 aa).

14 helical membrane-spanning segments follow: residues 1 to 21 (MLTL…PMQG), 33 to 53 (LALG…GEFD), 77 to 97 (VDGI…ICIL), 109 to 129 (YFLM…VVLD), 130 to 150 (ILLF…IVGI), 162 to 182 (FLLF…FLVI), 206 to 226 (LLWL…PFHV), 236 to 256 (PLAG…YGYM), 270 to 290 (FSPL…LATL), 295 to 315 (FKAL…LGLF), 326 to 346 (LLLS…VGGV), 365 to 385 (YMPL…AVPL), 405 to 425 (VFAV…IWLY), and 448 to 468 (FMLL…PNII).

This sequence belongs to the complex I subunit 4 family.

It is found in the mitochondrion inner membrane. It carries out the reaction a ubiquinone + NADH + 5 H(+)(in) = a ubiquinol + NAD(+) + 4 H(+)(out). Its function is as follows. Core subunit of the mitochondrial membrane respiratory chain NADH dehydrogenase (Complex I) that is believed to belong to the minimal assembly required for catalysis. Complex I functions in the transfer of electrons from NADH to the respiratory chain. The immediate electron acceptor for the enzyme is believed to be ubiquinone. This is NADH-ubiquinone oxidoreductase chain 4 (ND4) from Mycosarcoma maydis (Corn smut fungus).